We begin with the raw amino-acid sequence, 151 residues long: MPLYEHVFLARQDVTAQQVETMVETYKGVIETGGGTIEKIESWGVKSLAYRIKKNRKAHFTLLNISAPPAALAEMERQMQISEDVLRFMTVRVEQLEAEPSAMMQKRDRDDRKDRDRGDRPRRRDDDFGGGDRGDRGDRGDRPERNFGGEN.

Positions 97 to 151 (EAEPSAMMQKRDRDDRKDRDRGDRPRRRDDDFGGGDRGDRGDRGDRPERNFGGEN) are disordered. Positions 105–151 (QKRDRDDRKDRDRGDRPRRRDDDFGGGDRGDRGDRGDRPERNFGGEN) are enriched in basic and acidic residues.

Belongs to the bacterial ribosomal protein bS6 family.

Functionally, binds together with bS18 to 16S ribosomal RNA. The chain is Small ribosomal subunit protein bS6 from Methylorubrum populi (strain ATCC BAA-705 / NCIMB 13946 / BJ001) (Methylobacterium populi).